Reading from the N-terminus, the 351-residue chain is Dihydroorotate dehydrogenase (quinone) (351 aa).

FMN-binding positions include 67 to 71 (AGFDK) and Thr91. Lys71 is a binding site for substrate. 116-120 (NAMGF) serves as a coordination point for substrate. The FMN site is built by Asn145 and Asn178. Asn178 lines the substrate pocket. Ser181 functions as the Nucleophile in the catalytic mechanism. Asn183 provides a ligand contact to substrate. FMN-binding residues include Lys214 and Thr242. A substrate-binding site is contributed by 243–244 (NT). FMN contacts are provided by residues Gly262, Gly291, and 312–313 (YT).

This sequence belongs to the dihydroorotate dehydrogenase family. Type 2 subfamily. In terms of assembly, monomer. FMN is required as a cofactor.

Its subcellular location is the cell membrane. The enzyme catalyses (S)-dihydroorotate + a quinone = orotate + a quinol. Its pathway is pyrimidine metabolism; UMP biosynthesis via de novo pathway; orotate from (S)-dihydroorotate (quinone route): step 1/1. In terms of biological role, catalyzes the conversion of dihydroorotate to orotate with quinone as electron acceptor. The protein is Dihydroorotate dehydrogenase (quinone) of Nitratiruptor sp. (strain SB155-2).